We begin with the raw amino-acid sequence, 332 residues long: Geranylgeranyl pyrophosphate synthase 2 (332 aa).

Positions 55, 58, and 87 each coordinate isopentenyl diphosphate. Residues Asp-94 and Asp-98 each coordinate Mg(2+). Residue Arg-103 coordinates dimethylallyl diphosphate. Position 104 (Arg-104) interacts with isopentenyl diphosphate. Lys-181, Thr-182, and Gln-218 together coordinate dimethylallyl diphosphate. Asp-221 contributes to the Mg(2+) binding site. 3 residues coordinate dimethylallyl diphosphate: Asn-225, Lys-235, and Lys-245.

Belongs to the FPP/GGPP synthase family. Requires Mg(2+) as cofactor.

It catalyses the reaction isopentenyl diphosphate + dimethylallyl diphosphate = (2E)-geranyl diphosphate + diphosphate. The enzyme catalyses isopentenyl diphosphate + (2E)-geranyl diphosphate = (2E,6E)-farnesyl diphosphate + diphosphate. It carries out the reaction isopentenyl diphosphate + (2E,6E)-farnesyl diphosphate = (2E,6E,10E)-geranylgeranyl diphosphate + diphosphate. Its function is as follows. Geranylgeranyl pyrophosphate synthase; part of the gene cluster 3 that mediates the biosynthesis of an isoprenoid secondary metabolite. This is Geranylgeranyl pyrophosphate synthase 2 (GGS2) from Zymoseptoria tritici (strain CBS 115943 / IPO323) (Speckled leaf blotch fungus).